Reading from the N-terminus, the 1133-residue chain is Myb-binding protein 1A (1133 aa).

Disordered regions lie at residues 1–62 (MKSK…ENTA), 718–764 (PLSK…DAES), 924–943 (GEEH…SRQA), and 1111–1133 (KKVA…EEST). 2 stretches are compositionally biased toward basic and acidic residues: residues 20 to 35 (KAKE…KSEA) and 50 to 60 (EKPAETEEKEN). Composition is skewed to acidic residues over residues 725-735 (GEEESDDELDK) and 744-762 (DDSE…EDDA).

The protein belongs to the MYBBP1A family. Interacts with nclb.

The protein resides in the cytoplasm. The protein localises to the nucleus. Its subcellular location is the nucleolus. Its function is as follows. Has a role in rRNA biogenesis, cell proliferation and tissue growth by contributing to the localization of nclb to the nucleolus. This is Myb-binding protein 1A from Drosophila melanogaster (Fruit fly).